A 183-amino-acid polypeptide reads, in one-letter code: Ferritin heavy chain (183 aa).

Met-1 is subject to N-acetylmethionine. Thr-2 carries the N-acetylthreonine; in Ferritin heavy chain, N-terminally processed modification. In terms of domain architecture, Ferritin-like diiron spans 11-160; sequence QNYHQDSEAA…DHVTNLRKMG (150 aa). The Fe cation site is built by Glu-28, Glu-63, His-66, Glu-108, and Gln-142. Phosphoserine occurs at positions 179 and 183.

This sequence belongs to the ferritin family. Oligomer of 24 subunits. There are two types of subunits: L (light) chain and H (heavy) chain. The major chain can be light or heavy, depending on the species and tissue type. The functional molecule forms a roughly spherical shell with a diameter of 12 nm and contains a central cavity into which the insoluble mineral iron core is deposited. Interacts with NCOA4; NCOA4 promotes targeting of the iron-binding ferritin complex to autolysosomes following starvation or iron depletion.

Its subcellular location is the cytoplasm. It localises to the lysosome. It is found in the cytoplasmic vesicle. The protein resides in the autophagosome. It carries out the reaction 4 Fe(2+) + O2 + 4 H(+) = 4 Fe(3+) + 2 H2O. Functionally, stores iron in a soluble, non-toxic, readily available form. Important for iron homeostasis. Has ferroxidase activity. Iron is taken up in the ferrous form and deposited as ferric hydroxides after oxidation. Also plays a role in delivery of iron to cells. Mediates iron uptake in capsule cells of the developing kidney. Delivery to lysosomes is mediated by the cargo receptor NCOA4 for autophagic degradation and release of iron. This is Ferritin heavy chain (FTH1) from Canis lupus familiaris (Dog).